We begin with the raw amino-acid sequence, 368 residues long: Isocitrate dehydrogenase [NAD] subunit 2, mitochondrial (368 aa).

The transit peptide at 1–14 directs the protein to the mitochondrion; sequence MFRQSIVKQSCRFL. Positions 118, 128, 149, and 236 each coordinate substrate. Mg(2+)-binding residues include Asp-236, Asp-262, and Asp-266.

Belongs to the isocitrate and isopropylmalate dehydrogenases family. Octamer of two non-identical subunits IDH1 and IDH2. Mg(2+) serves as cofactor. The cofactor is Mn(2+).

The protein resides in the mitochondrion. The enzyme catalyses D-threo-isocitrate + NAD(+) = 2-oxoglutarate + CO2 + NADH. Performs an essential role in the oxidative function of the citric acid cycle. The sequence is that of Isocitrate dehydrogenase [NAD] subunit 2, mitochondrial (IDH2) from Kluyveromyces lactis (strain ATCC 8585 / CBS 2359 / DSM 70799 / NBRC 1267 / NRRL Y-1140 / WM37) (Yeast).